Here is a 168-residue protein sequence, read N- to C-terminus: Microtubule-associated protein Jupiter (168 aa).

A compositionally biased stretch (polar residues) spans 1-14 (MISNFDCTDNQASS). Residues 1 to 33 (MISNFDCTDNQASSKVLRPPGGGSSDIFGSEMP) are disordered. Ser-24 is subject to Phosphoserine. A Phosphothreonine modification is found at Thr-35. Positions 76–87 (RGQKTVDSHSRL) are enriched in basic and acidic residues. Disordered regions lie at residues 76–106 (RGQK…KSSI) and 124–168 (NGHY…GAGK). Phosphothreonine is present on residues Thr-92 and Thr-96. Phosphoserine occurs at positions 105, 133, and 144. Low complexity predominate over residues 131 to 144 (SGSVSSASSSVSSS). Over residues 145–155 (TENLKMNSGSR) the composition is skewed to polar residues.

The protein belongs to the MAP Jupiter family.

It localises to the nucleus. The protein localises to the cytoplasm. Its subcellular location is the cytoskeleton. It is found in the spindle. Binds to all microtubule populations. The chain is Microtubule-associated protein Jupiter from Drosophila simulans (Fruit fly).